The following is a 151-amino-acid chain: MSDSDTRKALNRAIGYLGIREHSRQEIRGKLKRNGFSDETIEKVLERLDTLNLLDDLSFARNFIRSRTRVKPSGLYKLRYELRQKGVPDDIAEEALREYDSAAQCLNAALKKMPFLKGDQEHRRKKLHTHLVNRGFDSQTIRQTLDELLTN.

The protein belongs to the RecX family.

The protein localises to the cytoplasm. Functionally, modulates RecA activity. This Prosthecochloris aestuarii (strain DSM 271 / SK 413) protein is Regulatory protein RecX.